Here is a 205-residue protein sequence, read N- to C-terminus: Holliday junction branch migration complex subunit RuvA (205 aa).

The segment at 1-64 is domain I; the sequence is MIGKLKGILE…EEAIRLFGFV (64 aa). The domain II stretch occupies residues 65 to 143; the sequence is AKAEQEWFCL…PFNDNALHFT (79 aa). The segment at 144–149 is flexible linker; that stretch reads PQPHLE. The domain III stretch occupies residues 150–205; it reads VTHQPTNDALSALVKLGFERDQAARALALAMNALEGETVSSALLIRHSLKLLSPST.

The protein belongs to the RuvA family. In terms of assembly, homotetramer. Forms an RuvA(8)-RuvB(12)-Holliday junction (HJ) complex. HJ DNA is sandwiched between 2 RuvA tetramers; dsDNA enters through RuvA and exits via RuvB. An RuvB hexamer assembles on each DNA strand where it exits the tetramer. Each RuvB hexamer is contacted by two RuvA subunits (via domain III) on 2 adjacent RuvB subunits; this complex drives branch migration. In the full resolvosome a probable DNA-RuvA(4)-RuvB(12)-RuvC(2) complex forms which resolves the HJ.

It localises to the cytoplasm. Functionally, the RuvA-RuvB-RuvC complex processes Holliday junction (HJ) DNA during genetic recombination and DNA repair, while the RuvA-RuvB complex plays an important role in the rescue of blocked DNA replication forks via replication fork reversal (RFR). RuvA specifically binds to HJ cruciform DNA, conferring on it an open structure. The RuvB hexamer acts as an ATP-dependent pump, pulling dsDNA into and through the RuvAB complex. HJ branch migration allows RuvC to scan DNA until it finds its consensus sequence, where it cleaves and resolves the cruciform DNA. The polypeptide is Holliday junction branch migration complex subunit RuvA (Bartonella quintana (strain Toulouse) (Rochalimaea quintana)).